A 578-amino-acid polypeptide reads, in one-letter code: Membrane protein insertase YidC (578 aa).

A helical membrane pass occupies residues 3–23 (IQRSILIVALAVVSYLLVLQW). The interval 34–71 (AASASMNTTQGLPDTPSAAGTSSDVPTAQSGAAGSEAA) is disordered. The segment covering 37–65 (ASMNTTQGLPDTPSAAGTSSDVPTAQSGA) has biased composition (polar residues). A run of 5 helical transmembrane segments spans residues 361–381 (LELT…FWLL), 387–407 (LIGN…LAFF), 457–477 (LGGC…YWVL), 500–520 (PFFI…MLNP), and 535–555 (PIIF…YWVV).

The protein belongs to the OXA1/ALB3/YidC family. Type 1 subfamily. As to quaternary structure, interacts with the Sec translocase complex via SecD. Specifically interacts with transmembrane segments of nascent integral membrane proteins during membrane integration.

The protein resides in the cell inner membrane. Its function is as follows. Required for the insertion and/or proper folding and/or complex formation of integral membrane proteins into the membrane. Involved in integration of membrane proteins that insert both dependently and independently of the Sec translocase complex, as well as at least some lipoproteins. Aids folding of multispanning membrane proteins. The sequence is that of Membrane protein insertase YidC from Pseudomonas paraeruginosa (strain DSM 24068 / PA7) (Pseudomonas aeruginosa (strain PA7)).